Here is a 2203-residue protein sequence, read N- to C-terminus: Genome polyprotein (2203 aa).

The N-myristoyl glycine; by host moiety is linked to residue G2. The Cytoplasmic segment spans residues 2-1513 (GAQVSTQKTG…HVSRAFICLQ (1512 aa)). Positions 567-583 (ELQNDVRQAVEGAIGRV) are amphipathic alpha-helix. Residues H890 and D908 each act as for protease 2A activity in the active site. Residues C925 and C927 each contribute to the Zn(2+) site. The For protease 2A activity role is filled by C979. Residues C985 and H987 each contribute to the Zn(2+) site. The segment at 1119-1191 (SNGWLKKFTE…EQSAPSQSDQ (73 aa)) is membrane-binding. Positions 1119-1257 (SNGWLKKFTE…SPGAGKSVAT (139 aa)) are oligomerization. An RNA-binding region spans residues 1140–1144 (AVKIQ). Residues 1223–1379 (EKKMSNYIQF…SMYSQNGKIN (157 aa)) form the SF3 helicase domain. Zn(2+) is bound by residues C1387, C1399, and C1404. A C4-type; degenerate zinc finger spans residues 1387–1404 (CDEECCPVNFKRCCPLVC). The interval 1431-1438 (EYNHRHSV) is RNA-binding. Positions 1442–1447 (LEALFQ) are oligomerization. The stretch at 1514 to 1529 (ALTTFVSVAGIIYIIY) is an intramembrane region. The Cytoplasmic portion of the chain corresponds to 1530 to 2203 (KLFAGFQGAY…TLRRKWLDSF (674 aa)). Y1539 is modified (O-(5'-phospho-RNA)-tyrosine). Positions 1559–1737 (GPAFEFAVAM…FSAALLRHYF (179 aa)) constitute a Peptidase C3 domain. Residues H1598, E1629, and C1705 each act as for protease 3C activity in the active site. The RdRp catalytic domain occupies 1968–2084 (GHLIAFDYSG…SYPWPIDASL (117 aa)). 2 residues coordinate Mg(2+): D1974 and D2070.

The protein belongs to the picornaviruses polyprotein family. Interacts with capsid protein VP1 and capsid protein VP3 to form heterotrimeric protomers. In terms of assembly, interacts with capsid protein VP0, and capsid protein VP3 to form heterotrimeric protomers. Five protomers subsequently associate to form pentamers which serve as building blocks for the capsid. Interacts with capsid protein VP2, capsid protein VP3 and capsid protein VP4 following cleavage of capsid protein VP0. As to quaternary structure, interacts with capsid protein VP1 and capsid protein VP3 in the mature capsid. Interacts with capsid protein VP0 and capsid protein VP1 to form heterotrimeric protomers. Five protomers subsequently associate to form pentamers which serve as building blocks for the capsid. Interacts with capsid protein VP4 in the mature capsid. Interacts with protein 2C; this interaction may be important for virion morphogenesis. In terms of assembly, interacts with capsid protein VP1 and capsid protein VP3. As to quaternary structure, homodimer. Homohexamer; forms a hexameric ring structure with 6-fold symmetry characteristic of AAA+ ATPases. Interacts (via N-terminus) with host RTN3 (via reticulon domain); this interaction is important for viral replication. Interacts with capsid protein VP3; this interaction may be important for virion morphogenesis. In terms of assembly, interacts with protein 3CD. As to quaternary structure, homodimer. Interacts with host GBF1. Interacts (via GOLD domain) with host ACBD3 (via GOLD domain); this interaction allows the formation of a viral protein 3A/ACBD3 heterotetramer with a 2:2 stoichiometry, which will stimulate the recruitment of host PI4KB in order to synthesize PI4P at the viral RNA replication sites. Interacts with RNA-directed RNA polymerase. In terms of assembly, interacts with protein 3AB and with RNA-directed RNA polymerase. As to quaternary structure, interacts with Viral protein genome-linked and with protein 3CD. It depends on Mg(2+) as a cofactor. In terms of processing, specific enzymatic cleavages in vivo by the viral proteases yield processing intermediates and the mature proteins. Myristoylation is required for the formation of pentamers during virus assembly. Further assembly of 12 pentamers and a molecule of genomic RNA generates the provirion. Post-translationally, during virion maturation, immature virions are rendered infectious following cleavage of VP0 into VP4 and VP2. This maturation seems to be an autocatalytic event triggered by the presence of RNA in the capsid and it is followed by a conformational change infectious virion. In terms of processing, myristoylation is required during RNA encapsidation and formation of the mature virus particle. VPg is uridylylated by the polymerase into VPg-pUpU. This acts as a nucleotide-peptide primer for the genomic RNA replication.

It is found in the virion. It localises to the host cytoplasm. Its subcellular location is the host cytoplasmic vesicle membrane. The protein localises to the host nucleus. The enzyme catalyses a ribonucleoside 5'-triphosphate + H2O = a ribonucleoside 5'-diphosphate + phosphate + H(+). The catalysed reaction is Selective cleavage of Tyr-|-Gly bond in the picornavirus polyprotein.. It carries out the reaction RNA(n) + a ribonucleoside 5'-triphosphate = RNA(n+1) + diphosphate. It catalyses the reaction Selective cleavage of Gln-|-Gly bond in the poliovirus polyprotein. In other picornavirus reactions Glu may be substituted for Gln, and Ser or Thr for Gly.. Replication or transcription is subject to high level of random mutations by the nucleotide analog ribavirin. Its function is as follows. Forms an icosahedral capsid of pseudo T=3 symmetry with capsid proteins VP2 and VP3. The capsid is 300 Angstroms in diameter, composed of 60 copies of each capsid protein and enclosing the viral positive strand RNA genome. Capsid protein VP1 mainly forms the vertices of the capsid. Capsid protein VP1 interacts with host cell receptor to provide virion attachment to target host cells. This attachment induces virion internalization. Tyrosine kinases are probably involved in the entry process. After binding to its receptor, the capsid undergoes conformational changes. Capsid protein VP1 N-terminus (that contains an amphipathic alpha-helix) and capsid protein VP4 are externalized. Together, they shape a pore in the host membrane through which viral genome is translocated to host cell cytoplasm. Functionally, forms an icosahedral capsid of pseudo T=3 symmetry with capsid proteins VP2 and VP3. The capsid is 300 Angstroms in diameter, composed of 60 copies of each capsid protein and enclosing the viral positive strand RNA genome. Lies on the inner surface of the capsid shell. After binding to the host receptor, the capsid undergoes conformational changes. Capsid protein VP4 is released, Capsid protein VP1 N-terminus is externalized, and together, they shape a pore in the host membrane through which the viral genome is translocated into the host cell cytoplasm. In terms of biological role, component of immature procapsids, which is cleaved into capsid proteins VP4 and VP2 after maturation. Allows the capsid to remain inactive before the maturation step. Its function is as follows. Cysteine protease that cleaves viral polyprotein and specific host proteins. It is responsible for the autocatalytic cleavage between the P1 and P2 regions, which is the first cleavage occurring in the polyprotein. Also cleaves the host translation initiation factor EIF4G1, in order to shut down the capped cellular mRNA translation. Inhibits the host nucleus-cytoplasm protein and RNA trafficking by cleaving host members of the nuclear pores. Counteracts stress granule formation probably by antagonizing its assembly or promoting its dissassembly. Functionally, plays an essential role in the virus replication cycle by acting as a viroporin. Creates a pore in the host endoplasmic reticulum and as a consequence releases Ca2+ in the cytoplasm of infected cell. In turn, high levels of cytoplasmic calcium may trigger membrane trafficking and transport of viral ER-associated proteins to viroplasms, sites of viral genome replication. Induces and associates with structural rearrangements of intracellular membranes. Displays RNA-binding, nucleotide binding and NTPase activities. May play a role in virion morphogenesis and viral RNA encapsidation by interacting with the capsid protein VP3. In terms of biological role, localizes the viral replication complex to the surface of membranous vesicles. Together with protein 3CD binds the Cis-Active RNA Element (CRE) which is involved in RNA synthesis initiation. Acts as a cofactor to stimulate the activity of 3D polymerase, maybe through a nucleid acid chaperone activity. Its function is as follows. Localizes the viral replication complex to the surface of membranous vesicles. It inhibits host cell endoplasmic reticulum-to-Golgi apparatus transport and causes the disassembly of the Golgi complex, possibly through GBF1 interaction. This would result in depletion of MHC, trail receptors and IFN receptors at the host cell surface. Plays an essential role in viral RNA replication by recruiting ACBD3 and PI4KB at the viral replication sites, thereby allowing the formation of the rearranged membranous structures where viral replication takes place. Functionally, acts as a primer for viral RNA replication and remains covalently bound to viral genomic RNA. VPg is uridylylated prior to priming replication into VPg-pUpU. The oriI viral genomic sequence may act as a template for this. The VPg-pUpU is then used as primer on the genomic RNA poly(A) by the RNA-dependent RNA polymerase to replicate the viral genome. During genome replication, the VPg-RNA linkage is removed by the host TDP2, thereby accelerating replication. During the late stage of the replication cycle, host TDP2 is excluded from sites of viral RNA synthesis and encapsidation, allowing for the generation of progeny virions. Involved in the viral replication complex and viral polypeptide maturation. It exhibits protease activity with a specificity and catalytic efficiency that is different from protease 3C. Protein 3CD lacks polymerase activity. Protein 3CD binds to the 5'UTR of the viral genome. In terms of biological role, replicates the viral genomic RNA on the surface of intracellular membranes. May form linear arrays of subunits that propagate along a strong head-to-tail interaction called interface-I. Covalently attaches UMP to a tyrosine of VPg, which is used to prime RNA synthesis. The positive stranded RNA genome is first replicated at virus induced membranous vesicles, creating a dsRNA genomic replication form. This dsRNA is then used as template to synthesize positive stranded RNA genomes. ss(+)RNA genomes are either translated, replicated or encapsidated. Its function is as follows. Major viral protease that mediates proteolytic processing of the polyprotein. Cleaves host EIF5B, contributing to host translation shutoff. Also cleaves host PABPC1, contributing to host translation shutoff. Cleaves host NLRP1, triggers host N-glycine-mediated degradation of the autoinhibitory NLRP1 N-terminal fragment. This Echovirus 9 (strain Barty) protein is Genome polyprotein.